The chain runs to 110 residues: Small ribosomal subunit protein bS16 (110 aa).

The disordered stretch occupies residues 87–110 (ARNNPEKAVPRKERKAAAEAAAKK).

The protein belongs to the bacterial ribosomal protein bS16 family.

This Rhodopseudomonas palustris (strain BisA53) protein is Small ribosomal subunit protein bS16.